We begin with the raw amino-acid sequence, 910 residues long: MMPSYTPMIQQYLHIKAQYPDAFLFFRLGDFYEMFFDDAIKAAQELEITLTSRDGGGDERVPMCGVPYHSAQGYIEQLVEKGYKVAICEQVEDPKTAKGVVRREVVQLVTPGTLMEGKGLTEKENHYLATLTPFADSTYGLAYADLSTGEVRLTLLSSWEETGNELHAIGAREIVISSDSAEEWVRELKERYGAAISYEDETWLRDEWSSVAGHVTQEKLRVTVARLLHYLVRTQKRQLDHLQPAELYQVDQYMKMDRHSKLHLELVETVRSKGRKGSLLWLLDETVTAMGGRLLKQWLDRPLIDQRAIERRLDFVETLKTSYFERHELRDRLRDVYDIERLVGRIAYGNANARDLVQLKKSLSQVPSLRQTVSGLPLAEVDELVGRLDPCEELVDLLERAIQEQPPLSIKEGNIIKDGYDERLDRYRDASRNGKAWIAELEAKEREVTGIKSLKVGYNRVFGYYIEVTKPNLPLIPEGRYERKQTLANAERFITAELKEKEALILEAEEKSVELEYELFVAIREQVKEYIPRLQTLAKAIAELDVLQALATVSDERRYVRPQFSTERVLAIEGGRHPVVEKVLGAQTYVPNDCYMNREREMLLITGPNMAGKSTYMRQVALTAIMAQIGCFVPAERAVLPIFDQVFTRIGAADDLSAGQSTFMVEMLEARRAITHATQNSLILFDEIGRGTSTYDGMALAQAMIEYIHDHIGAKTLFSTHYHELTALESSLERLCNVHARAVEENGKVVFLHQIADGPADRSYGIHVAELAGLPISLIERARDILAKLEQSSGNGSLEQGIGEEAGRENGSLMEAASQQQSELELTVGSAADRVVEQSVERQAEHRASAGNEASFEQLSMFPDLAPAPVEPHLSSKEKKALAALKEVNLLEMTPLEALNKLYELQKLLK.

An ATP-binding site is contributed by 607 to 614; that stretch reads GPNMAGKS.

The protein belongs to the DNA mismatch repair MutS family.

This protein is involved in the repair of mismatches in DNA. It is possible that it carries out the mismatch recognition step. This protein has a weak ATPase activity. The protein is DNA mismatch repair protein MutS of Geobacillus thermodenitrificans (strain NG80-2).